The sequence spans 445 residues: T-box transcription factor TBX19 (445 aa).

The T-box DNA-binding region spans 45–218; it reads LEDAPLWQRF…YNPFAKAFLD (174 aa).

It localises to the nucleus. Functionally, transcriptional regulator involved in developmental processes. Can activate POMC gene expression and repress the alpha glycoprotein subunit and thyroid-stimulating hormone beta promoters. This is T-box transcription factor TBX19 from Canis lupus familiaris (Dog).